A 398-amino-acid polypeptide reads, in one-letter code: 8-amino-7-oxononanoate synthase (398 aa).

Position 23 (Arg23) interacts with substrate. Residue Gly110–Tyr111 coordinates pyridoxal 5'-phosphate. Residue His135 coordinates substrate. The pyridoxal 5'-phosphate site is built by Ser181, His209, and Thr238. Lys241 carries the N6-(pyridoxal phosphate)lysine modification. Thr355 is a binding site for substrate.

The protein belongs to the class-II pyridoxal-phosphate-dependent aminotransferase family. BioF subfamily. Homodimer. Pyridoxal 5'-phosphate is required as a cofactor.

It carries out the reaction 6-carboxyhexanoyl-[ACP] + L-alanine + H(+) = (8S)-8-amino-7-oxononanoate + holo-[ACP] + CO2. The protein operates within cofactor biosynthesis; biotin biosynthesis. Its function is as follows. Catalyzes the decarboxylative condensation of pimeloyl-[acyl-carrier protein] and L-alanine to produce 8-amino-7-oxononanoate (AON), [acyl-carrier protein], and carbon dioxide. The sequence is that of 8-amino-7-oxononanoate synthase from Cellvibrio japonicus (strain Ueda107) (Pseudomonas fluorescens subsp. cellulosa).